Reading from the N-terminus, the 282-residue chain is Large ribosomal subunit protein uL2c (282 aa).

The interval 230–261 is disordered; it reads SAQNAVDHPHGGGEGKAPIGRIPSTPWGKPAL.

It belongs to the universal ribosomal protein uL2 family. Part of the 50S ribosomal subunit.

The protein localises to the plastid. The polypeptide is Large ribosomal subunit protein uL2c (rpl2) (Helicosporidium sp. subsp. Simulium jonesii (Green alga)).